A 538-amino-acid polypeptide reads, in one-letter code: Myeloid cell nuclear differentiation antigen-like protein (538 aa).

The region spanning 1-87 is the Pyrin domain; that stretch reads MAEYKKIVLL…AKKLKTEKAK (87 aa). The interval 120–306 is disordered; the sequence is SYKSVPSSKK…PQPQNQNIPR (187 aa). Basic and acidic residues-rich tracts occupy residues 135-153 and 245-262; these read AKTE…DHLP and RREE…KEPD. The span at 276-305 shows a compositional bias: low complexity; that stretch reads SPILHSSSSASSNIPSATNQKPQPQNQNIP. The 201-residue stretch at 299-499 folds into the HIN-200 domain; the sequence is PQNQNIPRGA…CGDHSFVKIK (201 aa).

It belongs to the HIN-200 family. As to expression, highest expression observed in spleen and thymus with moderate levels in bone marrow, lung, skin and heart, low levels in muscle, liver and intestine and little or no expression in brain and pancreas.

Its subcellular location is the nucleus. Functionally, suppresses cell growth when expressed ectopically. The chain is Myeloid cell nuclear differentiation antigen-like protein from Mus musculus (Mouse).